Consider the following 430-residue polypeptide: Phosphomethylpyrimidine synthase (430 aa).

Substrate contacts are provided by residues Asn67, Met96, Tyr125, His161, 183–185, 224–227, and Glu263; these read SRG and DALR. His267 contacts Zn(2+). Tyr290 is a substrate binding site. His331 serves as a coordination point for Zn(2+). [4Fe-4S] cluster is bound by residues Cys406, Cys409, and Cys413.

The protein belongs to the ThiC family. Homodimer. [4Fe-4S] cluster serves as cofactor.

It carries out the reaction 5-amino-1-(5-phospho-beta-D-ribosyl)imidazole + S-adenosyl-L-methionine = 4-amino-2-methyl-5-(phosphooxymethyl)pyrimidine + CO + 5'-deoxyadenosine + formate + L-methionine + 3 H(+). The protein operates within cofactor biosynthesis; thiamine diphosphate biosynthesis. Its function is as follows. Catalyzes the synthesis of the hydroxymethylpyrimidine phosphate (HMP-P) moiety of thiamine from aminoimidazole ribotide (AIR) in a radical S-adenosyl-L-methionine (SAM)-dependent reaction. The chain is Phosphomethylpyrimidine synthase from Campylobacter jejuni subsp. jejuni serotype O:2 (strain ATCC 700819 / NCTC 11168).